The sequence spans 127 residues: Major sperm protein 77/79 (127 aa).

Residue Ala-2 is modified to N-acetylalanine. Residues 9-126 (DIQTQPGTKI…RRKNLPIEYN (118 aa)) form the MSP domain.

Sperm.

Its subcellular location is the cell projection. The protein localises to the pseudopodium. It is found in the cytoplasm. It localises to the cytoskeleton. Its function is as follows. Central component in molecular interactions underlying sperm crawling. Forms an extensive filament system that extends from sperm villipoda, along the leading edge of the pseudopod. The chain is Major sperm protein 77/79 (msp-77) from Caenorhabditis elegans.